Consider the following 688-residue polypeptide: Homoaconitase, mitochondrial (688 aa).

Residues 1 to 19 (MALLYLSTRSSLKKTGARC) constitute a mitochondrion transit peptide. Cys-346, Cys-406, and Cys-409 together coordinate [4Fe-4S] cluster.

Belongs to the aconitase/IPM isomerase family. [4Fe-4S] cluster is required as a cofactor.

The protein localises to the mitochondrion. The catalysed reaction is (2R,3S)-homoisocitrate = cis-homoaconitate + H2O. The protein operates within amino-acid biosynthesis; L-lysine biosynthesis via AAA pathway; L-alpha-aminoadipate from 2-oxoglutarate: step 3/5. Its function is as follows. Catalyzes the reversible hydration of cis-homoaconitate to (2R,3S)-homoisocitrate, a step in the alpha-aminoadipate pathway for lysine biosynthesis. In Debaryomyces hansenii (strain ATCC 36239 / CBS 767 / BCRC 21394 / JCM 1990 / NBRC 0083 / IGC 2968) (Yeast), this protein is Homoaconitase, mitochondrial (LYS4).